The sequence spans 2582 residues: Chromodomain-helicase-DNA-binding protein 8 (2582 aa).

Disordered regions lie at residues 22–111, 136–155, 253–283, and 349–377; these read DDSF…PVLQ, MGVS…PSQS, VKGS…TQGE, and QKIQ…PLTL. Polar residues-rich tracts occupy residues 42-51, 94-111, and 141-155; these read SLDSLDQMNQ, DYTT…PVLQ, and TGVS…PSQS. The segment covering 255–267 has biased composition (low complexity); the sequence is GSAPAGNPGAAGP. A compositionally biased stretch (pro residues) spans 355–372; the sequence is PQPPSSQPQPQPQPPPSA. Phosphoserine is present on Ser434. 2 disordered regions span residues 475 to 585 and 598 to 617; these read RARG…VKRK and DEEE…PILP. Positions 495 to 518 are enriched in basic and acidic residues; sequence RPEEEGEKKRRKKSSGERLKEEKP. 2 positions are modified to phosphoserine: Ser555 and Ser564. Basic residues predominate over residues 574–585; that stretch reads QKRRSNRQVKRK. A Glycyl lysine isopeptide (Lys-Gly) (interchain with G-Cter in SUMO) cross-link involves residue Lys611. Chromo domains follow at residues 644 to 711 and 726 to 792; these read AIVD…AQMR and VEVD…RVNR. One can recognise a Helicase ATP-binding domain in the interval 825–999; that stretch reads LFNWYNRQNC…FSLLHFLEPS (175 aa). 838–845 is an ATP binding site; that stretch reads DEMGLGKT. The DEAH box motif lies at 950–953; it reads DEAH. Residues 1139 to 1290 enclose the Helicase C-terminal domain; the sequence is LIDKLLPKLK…KAVLQSMSGR (152 aa). Ser1422 and Ser1426 each carry phosphoserine. The segment at 1694-1715 is disordered; that stretch reads EDPEYKPLQGPPKDPDDEGDPL. The tract at residues 1791–2304 is interaction with FAM124B; it reads IARREKQQRW…LVELEVECME (514 aa). Phosphoserine occurs at positions 1978 and 1980. Residues 1990–2019 are disordered; it reads QCTSRTASPSPLRPDAPVEKSPEESTVQVP. At Thr1995 the chain carries Phosphothreonine. Phosphoserine occurs at positions 1997, 1999, and 2010. Lys2027 is covalently cross-linked (Glycyl lysine isopeptide (Lys-Gly) (interchain with G-Cter in SUMO2)). Residues Ser2040, Ser2070, and Ser2072 each carry the phosphoserine modification. A disordered region spans residues 2045 to 2120; that stretch reads VRVGSSDTAP…RSRPKLYDEE (76 aa). The segment covering 2065 to 2074 has biased composition (acidic residues); sequence EDEDDSDSEL. Positions 2077–2096 are enriched in low complexity; that stretch reads SKLSPSSSSSSSSSSSSSST. The span at 2104-2118 shows a compositional bias: basic and acidic residues; it reads EEKLTADRSRPKLYD. 3 positions are modified to phosphoserine: Ser2184, Ser2202, and Ser2204. Residues 2187 to 2233 are disordered; the sequence is VTAGGILGPGNHLLDSPSLTPGEDGDSPVPTPRSGSAASMAEEEASA. Thr2206 carries the post-translational modification Phosphothreonine. Ser2213 bears the Phosphoserine mark. The residue at position 2217 (Thr2217) is a Phosphothreonine. Residues 2222–2233 are compositionally biased toward low complexity; that stretch reads SAASMAEEEASA. Ser2225 carries the post-translational modification Phosphoserine. Lys2258 participates in a covalent cross-link: Glycyl lysine isopeptide (Lys-Gly) (interchain with G-Cter in SUMO2). Positions 2486–2582 are disordered; it reads HVDSSTMLHH…NSDSSEDADD (97 aa). Residues 2493 to 2511 show a composition bias toward basic residues; sequence LHHHHHHPHPHHHHHHHPG. The span at 2514 to 2529 shows a compositional bias: low complexity; that stretch reads TTGYPSSPATTTSGTA. At Ser2520 the chain carries Phosphoserine. Over residues 2537–2551 the composition is skewed to acidic residues; the sequence is PEDDDEEEDEEDDDL.

The protein belongs to the SNF2/RAD54 helicase family. CHD8 subfamily. In terms of assembly, interacts with CTNNB1 and PIAS3. Component of some MLL1/MLL complex, at least composed of the core components KMT2A/MLL1, ASH2L, HCFC1/HCF1, WDR5 and RBBP5, as well as the facultative components BACC1, CHD8, E2F6, HSP70, INO80C, KANSL1, LAS1L, MAX, MCRS1, MGA, KAT8/MOF, PELP1, PHF20, PRP31, RING2, RUVB1/TIP49A, RUVB2/TIP49B, SENP3, TAF1, TAF4, TAF6, TAF7, TAF9 and TEX10. Interacts with CHD7. Interacts with FAM124B. Interacts with p53/TP53 and histone H1. Interacts with CTCF. Interacts with TLK2. Interacts with HNRNPL in an RNA-dependent manner. Post-translationally, sumoylated.

It is found in the nucleus. The enzyme catalyses ATP + H2O = ADP + phosphate + H(+). ATP-dependent chromatin-remodeling factor, it slides nucleosomes along DNA; nucleosome sliding requires ATP. Acts as a transcription repressor by remodeling chromatin structure and recruiting histone H1 to target genes. Suppresses p53/TP53-mediated apoptosis by recruiting histone H1 and preventing p53/TP53 transactivation activity. Acts as a negative regulator of Wnt signaling pathway by regulating beta-catenin (CTNNB1) activity. Negatively regulates CTNNB1-targeted gene expression by being recruited specifically to the promoter regions of several CTNNB1 responsive genes. Involved in both enhancer blocking and epigenetic remodeling at chromatin boundary via its interaction with CTCF. Acts as a suppressor of STAT3 activity by suppressing the LIF-induced STAT3 transcriptional activity. Also acts as a transcription activator via its interaction with ZNF143 by participating in efficient U6 RNA polymerase III transcription. Regulates alternative splicing of a core group of genes involved in neuronal differentiation, cell cycle and DNA repair. Enables H3K36me3-coupled transcription elongation and co-transcriptional RNA processing likely via interaction with HNRNPL. This is Chromodomain-helicase-DNA-binding protein 8 from Mus musculus (Mouse).